Here is a 76-residue protein sequence, read N- to C-terminus: Mu-scoloptoxin(15)-Ssm1a (76 aa).

A signal peptide spans 1 to 23; the sequence is MEKKIIFLVFLVALLALPGFIST. An important for inhibition of KCNQ4 region spans residues 33 to 36; that stretch reads KKRK. Cystine bridges form between Cys43–Cys69 and Cys47–Cys71.

This sequence belongs to the scoloptoxin-15 family. Expressed by the venom gland.

It localises to the secreted. In terms of biological role, blocks voltage-gated potassium channels Kv7.4/KCNQ4 (IC(50)=2.5 uM), Kv7.1/KCNQ1 (IC(50)=2.8 uM), Kv7.2/KCNQ2 (IC(50)=2.7 uM) and Kv7.5/KCNQ5 (IC(50)=2.7 uM). Targets the pore domain, in particular negatively charged residues 'Asp-266' and 'Asp-288', of KCNQ4 and probably other KCNQ channel family members where these residues are conserved. In vivo, shows vasoconstrictive activity resulting in acute hypertension when injected intravenously in mice. Also induces coronary vasospasms ultimately leading to heart failure. Induces seizures when injected into the hippocampus of mice. Decreases respiratory rate while increasing respiratory amplitude, probably by triggering a contraction of the bronchial ring. The sequence is that of Mu-scoloptoxin(15)-Ssm1a from Scolopendra mutilans (Chinese red-headed centipede).